A 502-amino-acid polypeptide reads, in one-letter code: Probable cytosol aminopeptidase (502 aa).

Mn(2+)-binding residues include K269 and D274. Residue K281 is part of the active site. Residues D292, D351, and E353 each contribute to the Mn(2+) site. Residue R355 is part of the active site.

It belongs to the peptidase M17 family. Mn(2+) is required as a cofactor.

Its subcellular location is the cytoplasm. The enzyme catalyses Release of an N-terminal amino acid, Xaa-|-Yaa-, in which Xaa is preferably Leu, but may be other amino acids including Pro although not Arg or Lys, and Yaa may be Pro. Amino acid amides and methyl esters are also readily hydrolyzed, but rates on arylamides are exceedingly low.. It carries out the reaction Release of an N-terminal amino acid, preferentially leucine, but not glutamic or aspartic acids.. Presumably involved in the processing and regular turnover of intracellular proteins. Catalyzes the removal of unsubstituted N-terminal amino acids from various peptides. This Vibrio vulnificus (strain CMCP6) protein is Probable cytosol aminopeptidase.